Reading from the N-terminus, the 147-residue chain is Cyanate hydratase (147 aa).

Residues Arg-88, Glu-91, and Ser-114 contribute to the active site.

This sequence belongs to the cyanase family.

It carries out the reaction cyanate + hydrogencarbonate + 3 H(+) = NH4(+) + 2 CO2. Functionally, catalyzes the reaction of cyanate with bicarbonate to produce ammonia and carbon dioxide. This is Cyanate hydratase from Prochlorococcus marinus subsp. pastoris (strain CCMP1986 / NIES-2087 / MED4).